Reading from the N-terminus, the 208-residue chain is 3-demethoxyubiquinol 3-hydroxylase (208 aa).

The Fe cation site is built by glutamate 57, glutamate 87, histidine 90, glutamate 139, glutamate 171, and histidine 174.

This sequence belongs to the COQ7 family. The cofactor is Fe cation.

It is found in the cell membrane. It catalyses the reaction a 5-methoxy-2-methyl-3-(all-trans-polyprenyl)benzene-1,4-diol + AH2 + O2 = a 3-demethylubiquinol + A + H2O. It functions in the pathway cofactor biosynthesis; ubiquinone biosynthesis. Catalyzes the hydroxylation of 2-nonaprenyl-3-methyl-6-methoxy-1,4-benzoquinol during ubiquinone biosynthesis. This Burkholderia pseudomallei (strain 668) protein is 3-demethoxyubiquinol 3-hydroxylase.